Consider the following 145-residue polypeptide: Acidic phospholipase A2 homolog textilotoxin C chain (145 aa).

The first 19 residues, 1 to 19 (MHPAHLLVLLGVYVSLLGA), serve as a signal peptide directing secretion. The propeptide occupies 20–27 (ARIPPLPL). Intrachain disulfides connect C38–C98, C54–C144, C56–C72, C71–C125, C78–C118, C87–C111, and C105–C116.

It belongs to the phospholipase A2 family. Group I subfamily. D49 sub-subfamily. Heterohexamer. 2 forms exist: 2 A or 2 B chains, 2 C chains and 2 covalently-linked D chains, and 1 A or 1 B, 1 C, 2 covalently-linked D chains and 2 differentially glycosylated covalently-linked D chains. Textilotoxin was originally described as pentameric. Expressed by the venom gland.

It is found in the secreted. Its function is as follows. Snake venom oligomeric phospholipase A2 that has potent presynaptic neurotoxicity. Chain C is not itself neurotoxic, but it is essential for the neurotoxicity of textilotoxin. Chain C possesses a very low phospholipase activity. This Pseudonaja textilis (Eastern brown snake) protein is Acidic phospholipase A2 homolog textilotoxin C chain.